Reading from the N-terminus, the 469-residue chain is ATP synthase subunit beta (469 aa).

Glycine 155–threonine 162 is an ATP binding site.

Belongs to the ATPase alpha/beta chains family. F-type ATPases have 2 components, CF(1) - the catalytic core - and CF(0) - the membrane proton channel. CF(1) has five subunits: alpha(3), beta(3), gamma(1), delta(1), epsilon(1). CF(0) has three main subunits: a(1), b(2) and c(9-12). The alpha and beta chains form an alternating ring which encloses part of the gamma chain. CF(1) is attached to CF(0) by a central stalk formed by the gamma and epsilon chains, while a peripheral stalk is formed by the delta and b chains.

The protein resides in the cell inner membrane. It catalyses the reaction ATP + H2O + 4 H(+)(in) = ADP + phosphate + 5 H(+)(out). Produces ATP from ADP in the presence of a proton gradient across the membrane. The catalytic sites are hosted primarily by the beta subunits. This is ATP synthase subunit beta from Syntrophus aciditrophicus (strain SB).